Reading from the N-terminus, the 727-residue chain is Protein edg-1 (727 aa).

The disordered stretch occupies residues Phe-703–Asp-727.

As to quaternary structure, may interact with deps-1 and prg-1.

Its subcellular location is the cytoplasmic granule. Functionally, plays a role in regulating deps-1 cluster formation in the germline. This chain is Protein edg-1, found in Caenorhabditis elegans.